Consider the following 268-residue polypeptide: Zinc finger protein SNAI2 (268 aa).

The tract at residues 1-20 (MPRSFLVKKHFNASKKPNYS) is SNAG domain. Residues 80–117 (PASLGRVSPPPPSDTSSKDHSGSESPISDEEERLQSKL) form a disordered region. 4 C2H2-type zinc fingers span residues 128–150 (FQCN…KQLH), 159–181 (FSCK…IRTH), 185–207 (CVCK…IRTH), and 213–235 (FSCS…LQTH). The segment at 241 to 264 (YQCKSCSKTFSRMSLLHKHEESGC) adopts a C2H2-type 5; atypical zinc-finger fold.

The protein belongs to the snail C2H2-type zinc-finger protein family. Interacts (via SNAG domain) with LIMD1 (via LIM domains), WTIP (via LIM domains) and AJUBA (via LIM domains). Interacts (via zinc fingers) with KPNA2, KPNB1, and TNPO1. May interact (via zinc fingers) with IPO7. Phosphorylated by GSK3B. Once phosphorylated, it becomes a target for ubiquitination. Post-translationally, ubiquitinated by the SCF(FBXO11) complex; ubiquitination requires previous GSK3B-mediated SNAI2 phosphorylation.

The protein resides in the nucleus. It is found in the cytoplasm. Transcriptional repressor that modulates both activator-dependent and basal transcription. Involved in the generation and migration of neural crest cells. Plays a role in mediating RAF1-induced transcriptional repression of the TJ protein, occludin (OCLN) and subsequent oncogenic transformation of epithelial cells. Represses BRCA2 expression by binding to its E2-box-containing silencer and recruiting CTBP1 and HDAC1 in breast cells. In epidermal keratinocytes, binds to the E-box in ITGA3 promoter and represses its transcription. Involved in the regulation of ITGB1 and ITGB4 expression and cell adhesion and proliferation in epidermal keratinocytes. Binds to E-box2 domain of BSG and activates its expression during TGFB1-induced epithelial-mesenchymal transition (EMT) in hepatocytes. Represses E-Cadherin/CDH1 transcription via E-box elements. Involved in osteoblast maturation. Binds to RUNX2 and SOC9 promoters and may act as a positive and negative transcription regulator, respectively, in osteoblasts. Binds to CXCL12 promoter via E-box regions in mesenchymal stem cells and osteoblasts. Plays an essential role in TWIST1-induced EMT and its ability to promote invasion and metastasis. The chain is Zinc finger protein SNAI2 (SNAI2) from Bos taurus (Bovine).